A 141-amino-acid chain; its full sequence is MSIVIGADAAGLRLKEVVKDFLEKENFHLVDVTAEGQDFVDVTLAVAAEVNKEEQNLGIVIDAYGAGPFMVATKIKGMVAAEVSDERSAYMTRGHNNSRMITMGAQLVGDELAKNIAKGFVNGKYDGGRHQIRVDMLNKMG.

The protein belongs to the LacAB/RpiB family. In terms of assembly, heteromultimeric protein consisting of LacA and LacB.

The enzyme catalyses aldehydo-D-galactose 6-phosphate = keto-D-tagatose 6-phosphate. It functions in the pathway carbohydrate metabolism; D-galactose 6-phosphate degradation; D-tagatose 6-phosphate from D-galactose 6-phosphate: step 1/1. This chain is Galactose-6-phosphate isomerase subunit LacA, found in Streptococcus pneumoniae serotype 2 (strain D39 / NCTC 7466).